Reading from the N-terminus, the 201-residue chain is Superoxide dismutase [Mn] (201 aa).

The Mn(2+) site is built by histidine 27, histidine 81, aspartate 163, and histidine 167.

This sequence belongs to the iron/manganese superoxide dismutase family. As to quaternary structure, homodimer. It depends on Mn(2+) as a cofactor.

The protein resides in the secreted. It catalyses the reaction 2 superoxide + 2 H(+) = H2O2 + O2. Its function is as follows. Destroys superoxide anion radicals which are normally produced within the cells and which are toxic to biological systems. This chain is Superoxide dismutase [Mn] (sodA), found in Streptococcus pyogenes serotype M3 (strain ATCC BAA-595 / MGAS315).